A 336-amino-acid polypeptide reads, in one-letter code: NADH-quinone oxidoreductase subunit H (336 aa).

Helical transmembrane passes span 14–34 (IIVA…AFLV), 82–102 (IIFL…WAVI), 115–135 (VGIL…IMAG), 161–181 (IGLV…SDVV), 186–206 (TVWF…SALA), 247–267 (ILMS…PLDV), 273–293 (VPGP…FVWV), and 312–332 (VFLP…VTFD).

The protein belongs to the complex I subunit 1 family. As to quaternary structure, NDH-1 is composed of 14 different subunits. Subunits NuoA, H, J, K, L, M, N constitute the membrane sector of the complex.

It localises to the cell inner membrane. It catalyses the reaction a quinone + NADH + 5 H(+)(in) = a quinol + NAD(+) + 4 H(+)(out). NDH-1 shuttles electrons from NADH, via FMN and iron-sulfur (Fe-S) centers, to quinones in the respiratory chain. The immediate electron acceptor for the enzyme in this species is believed to be ubiquinone. Couples the redox reaction to proton translocation (for every two electrons transferred, four hydrogen ions are translocated across the cytoplasmic membrane), and thus conserves the redox energy in a proton gradient. This subunit may bind ubiquinone. This Rhodospirillum centenum (strain ATCC 51521 / SW) protein is NADH-quinone oxidoreductase subunit H.